A 152-amino-acid polypeptide reads, in one-letter code: Histone H2B.1 (152 aa).

Residues 1 to 28 are compositionally biased toward basic and acidic residues; the sequence is MAPKAEKKPAAKKPAEEEPAAEKAEKTP. The disordered stretch occupies residues 1–60; sequence MAPKAEKKPAAKKPAEEEPAAEKAEKTPAGKKPKAEKRLPAGKSAAKEGGDKKGKKKAKK. 2 positions are modified to N6-acetyllysine: lysine 7 and lysine 37. Lysine 148 is covalently cross-linked (Glycyl lysine isopeptide (Lys-Gly) (interchain with G-Cter in ubiquitin)).

This sequence belongs to the histone H2B family. The nucleosome is a histone octamer containing two molecules each of H2A, H2B, H3 and H4 assembled in one H3-H4 heterotetramer and two H2A-H2B heterodimers. The octamer wraps approximately 147 bp of DNA. Post-translationally, can be acetylated to form H2BK6ac and H2BK33ac. In terms of processing, monoubiquitinated to form H2BK143ub1; may give a specific tag for epigenetic transcriptional activation.

The protein localises to the nucleus. It is found in the chromosome. Functionally, core component of nucleosome. Nucleosomes wrap and compact DNA into chromatin, limiting DNA accessibility to the cellular machineries which require DNA as a template. Histones thereby play a central role in transcription regulation, DNA repair, DNA replication and chromosomal stability. DNA accessibility is regulated via a complex set of post-translational modifications of histones, also called histone code, and nucleosome remodeling. This is Histone H2B.1 from Triticum aestivum (Wheat).